A 200-amino-acid chain; its full sequence is NADH-quinone oxidoreductase subunit C (200 aa).

This sequence belongs to the complex I 30 kDa subunit family. In terms of assembly, NDH-1 is composed of 14 different subunits. Subunits NuoB, C, D, E, F, and G constitute the peripheral sector of the complex.

Its subcellular location is the cell inner membrane. The catalysed reaction is a quinone + NADH + 5 H(+)(in) = a quinol + NAD(+) + 4 H(+)(out). Its function is as follows. NDH-1 shuttles electrons from NADH, via FMN and iron-sulfur (Fe-S) centers, to quinones in the respiratory chain. The immediate electron acceptor for the enzyme in this species is believed to be ubiquinone. Couples the redox reaction to proton translocation (for every two electrons transferred, four hydrogen ions are translocated across the cytoplasmic membrane), and thus conserves the redox energy in a proton gradient. This chain is NADH-quinone oxidoreductase subunit C, found in Burkholderia thailandensis (strain ATCC 700388 / DSM 13276 / CCUG 48851 / CIP 106301 / E264).